The sequence spans 199 residues: uncharacterized protein (199 aa).

In terms of domain architecture, G-patch spans 112-160 (PKSLGYRVLSQYGWSPQGDTAGLGLENQGRRAPVRAFRVKNDTIGLGTK).

This is an uncharacterized protein from Schizosaccharomyces pombe (strain 972 / ATCC 24843) (Fission yeast).